The sequence spans 238 residues: Cell division protein A (238 aa).

Interacts with CdvB.

Its subcellular location is the cytoplasm. The protein resides in the nucleoid. It localises to the cell membrane. In terms of biological role, part of a cell division machinery. The CdvA, CdvB and CdvC proteins polymerize between segregating nucleoids and persist throughout cell division, forming a successively smaller structure during constriction. CdvA is a membrane interacting protein that recruits ESCRT-III homologs to the membrane. This is Cell division protein A from Sulfolobus acidocaldarius (strain ATCC 33909 / DSM 639 / JCM 8929 / NBRC 15157 / NCIMB 11770).